Reading from the N-terminus, the 122-residue chain is RxLR effector protein Avh52 (122 aa).

An N-terminal signal peptide occupies residues 1–21; that stretch reads MRLTSILVLVIAATFHTTGTA. The RxLR-dEER signature appears at 50-68; the sequence is RLLRRVEKDKVDYEQDEQR. Residues 69–86 form a TAP1-binding region; sequence SFGALKDAVKKLNPVTAV. The segment at 87–98 is nuclear localization signal (NLS); that stretch reads KKFFKQRARRKK.

The protein belongs to the RxLR effector family. Interacts with host acetyl transferase TAP1.

The protein resides in the secreted. It localises to the host nucleus. Its function is as follows. Effector that suppresses plant defense responses during the early stages of pathogen infection. Suppresses cell death induced by effectors and PAMPs in plant hosts. Interacts with host acetyltransferase TAP1 and causes TAP1 relocation into the nucleus where it acetylates histones H2A and H3 during early infection, thereby promoting susceptibility of host plant to P.sojae. The polypeptide is RxLR effector protein Avh52 (Phytophthora sojae (Soybean stem and root rot agent)).